A 719-amino-acid polypeptide reads, in one-letter code: Putative ankyrin repeat protein RBE_0319 (719 aa).

ANK repeat units follow at residues Val377–Ser406, Thr408–Glu438, Asn442–Lys472, Tyr476–Gln506, Tyr510–Glu540, Leu544–Gln572, Asp576–Glu605, His609–Glu639, and Gln642–Lys672.

This chain is Putative ankyrin repeat protein RBE_0319, found in Rickettsia bellii (strain RML369-C).